A 1182-amino-acid chain; its full sequence is Protein patched homolog 2 (1182 aa).

The Cytoplasmic portion of the chain corresponds to 1–57 (MVRPLSLGELPPSYTPPARSSAPHILAGSLQAPLWLRAYFQGLLFSLGCRIQKHCGK). Residues 58 to 78 (VLFLGLVAFGALALGLRVAVI) form a helical membrane-spanning segment. Topologically, residues 79-394 (ETDLEQLWVE…DILRAFSEVS (316 aa)) are extracellular. The N-linked (GlcNAc...) asparagine glycan is linked to Asn-370. An SSD domain is found at 394-552 (STTRVVGGYL…MLVFPAILSL (159 aa)). Residues 395–414 (TTRVVGGYLLMLAYACVTML) form a helical membrane-spanning segment. The Cytoplasmic portion of the chain corresponds to 415–428 (RWDCAQSQGAVGLA). The chain crosses the membrane as a helical span at residues 429-449 (GVLLVALAVASGLGLCALLGI). Topologically, residues 450 to 457 (TFNAATTQ) are extracellular. A helical transmembrane segment spans residues 458 to 478 (VLPFLALGIGVDDIFLLAHAF). The Cytoplasmic segment spans residues 479-501 (TKAPPDTPLPERMGECLRSTGTS). A helical transmembrane segment spans residues 502–522 (VALTSVNNMVAFFMAALVPIP). Residues 523-531 (ALRAFSLQA) are Extracellular-facing. Residues 532 to 552 (AIVVGCNFAAVMLVFPAILSL) form a helical membrane-spanning segment. Residues 553 to 686 (DLRRRHRQRL…APLLLQTRAK (134 aa)) lie on the Cytoplasmic side of the membrane. Residues 687-707 (ALVLLFFGALLGLSLYGATLV) form a helical membrane-spanning segment. Residues 708-963 (QDGLALTDVV…WEQYLGLRRC (256 aa)) lie on the Extracellular side of the membrane. N-linked (GlcNAc...) asparagine glycosylation is present at Asn-812. A helical membrane pass occupies residues 964-984 (FLLAVCILLVCTFLVCALLLL). The Cytoplasmic segment spans residues 985 to 991 (SPWTAGL). The helical transmembrane segment at 992-1012 (IVLVLAMMTVELFGIMGFLGI) threads the bilayer. Lys-1013 is a topological domain (extracellular). The helical transmembrane segment at 1014–1034 (LSAIPVVILVASIGIGVEFTV) threads the bilayer. At 1035–1064 (HVALGFLTSHGSRNLRAASALEQTFAPVTD) the chain is on the cytoplasmic side. The helical transmembrane segment at 1065-1085 (GAVSTLLGLLMLAGSNFDFII) threads the bilayer. Residue Arg-1086 is a topological domain, extracellular. A helical transmembrane segment spans residues 1087–1107 (YFFVVLTVLTLLGLLHGLLLL). The Cytoplasmic segment spans residues 1108 to 1182 (PVLLSILGPP…YVHPASEEPT (75 aa)).

This sequence belongs to the patched family. As to expression, expressed in epithelial cells of the developing hair, tooth and whisker.

The protein resides in the membrane. Functionally, plays a role in the control of cellular growth. May have a role in epidermal development. May act as a receptor for Sonic hedgehog (SHH). This is Protein patched homolog 2 (Ptch2) from Mus musculus (Mouse).